We begin with the raw amino-acid sequence, 1687 residues long: Brefeldin A-inhibited guanine nucleotide-exchange protein 1 (1687 aa).

The disordered stretch occupies residues 494 to 529 (SLENEAPANNHSNSNEEDGTTIDHDFHPDLNPESSD). The segment covering 514–523 (TIDHDFHPDL) has biased composition (basic and acidic residues). The SEC7 domain maps to 532–719 (TLEQRRAYKI…GALYDQVVIN (188 aa)). Glutamate 634 is a catalytic residue. A disordered region spans residues 1229–1248 (KGRSSSPSTPVTDDHSPSTQ). The span at 1232–1248 (SSSPSTPVTDDHSPSTQ) shows a compositional bias: polar residues.

In terms of assembly, homodimer.

It is found in the cytoplasm. Its subcellular location is the cytosol. The protein localises to the membrane. Its activity is regulated as follows. Inhibited by brefeldin A. Activates the ARF proteins by exchanging bound GDP for free GTP. Plays a role in vesicular protein sorting. The protein is Brefeldin A-inhibited guanine nucleotide-exchange protein 1 (BIG1) of Arabidopsis thaliana (Mouse-ear cress).